A 389-amino-acid chain; its full sequence is MVSVSEIRKAQRAEGPATILAIGTANPSNRVEQSTYPDFYFKITNSEHKVELKQKFQRMCDKSMIKSRYMYLTEEILKENPSVCEYMAPSLDVRQDMVVVEVPRLGKEAAVKAIKEWGQPKSKITHLIFCTTSGVDMPGADYQLTKLLGLRPYVKRYMMYQQGCFAGGTVLRLAKDLAENNKGARVLVVCSEVTAVTFRGPSDTHLDSLVGQALFGDGAAALIVGSDPIPEIEKPIFEMVWTAQTIAPDSEGAIDGHLREAGLTFHLLKDVPGIVSKNIDKALIEAFQPLNISDYNSIFWIAHPGGPAILDQVEEKLALKPEKMRATREVLSEYGNMSSACVLFILDEMRRKSAKDGLKTTGEGLEWGVLFGFGPGLTIETVVLHSVAI.

Cysteine 164 is a catalytic residue.

It belongs to the thiolase-like superfamily. Chalcone/stilbene synthases family.

The enzyme catalyses (E)-4-coumaroyl-CoA + 3 malonyl-CoA + 3 H(+) = 2',4,4',6'-tetrahydroxychalcone + 3 CO2 + 4 CoA. It functions in the pathway secondary metabolite biosynthesis; flavonoid biosynthesis. Its function is as follows. The primary product of this enzyme is 4,2',4',6'-tetrahydroxychalcone (also termed naringenin-chalcone or chalcone) which can under specific conditions spontaneously isomerize into naringenin. The chain is Chalcone synthase 1 (CHS1) from Cicer arietinum (Chickpea).